A 296-amino-acid polypeptide reads, in one-letter code: Sulfotransferase 1C2 (296 aa).

49–54 (KAGTTW) lines the 3'-phosphoadenylyl sulfate pocket. 107–109 (KTH) lines the substrate pocket. Residue H109 is the Proton acceptor of the active site. 3'-phosphoadenylyl sulfate-binding positions include R131, S139, Y194, and 228–233 (TSFEKM). The residue at position 139 (S139) is a Phosphoserine. A Phosphoserine modification is found at S254. 256-260 (FMRKG) serves as a coordination point for 3'-phosphoadenylyl sulfate.

The protein belongs to the sulfotransferase 1 family. As to expression, found in adult stomach, kidney and thyroid gland, and in fetal kidney and liver.

It is found in the cytoplasm. The protein resides in the lysosome. The protein localises to the mitochondrion. The catalysed reaction is a phenol + 3'-phosphoadenylyl sulfate = an aryl sulfate + adenosine 3',5'-bisphosphate + H(+). It carries out the reaction cholesterol + 3'-phosphoadenylyl sulfate = cholesterol sulfate + adenosine 3',5'-bisphosphate + H(+). Functionally, sulfotransferase that utilizes 3'-phospho-5'-adenylyl sulfate (PAPS) to catalyze the sulfate conjugation of phenolic compounds. Does not transfer sulfate to steroids, dopamine, acetaminophen, or alpha-naphthol. Except in mitochondria, where it can add sulfate to cholesterol producing cholesterol sulfate, which alters mitochondrial membrane organization, and impacts protein complex mobility increasing state-III respiration, thereby modulating mitochondrial respiration. Catalyzes the sulfation of the carcinogenic N-hydroxy-2-acetylaminofluorene leading to highly reactive intermediates capable of forming DNA adducts, potentially resulting in mutagenesis. The sequence is that of Sulfotransferase 1C2 (SULT1C2) from Homo sapiens (Human).